The sequence spans 425 residues: Serine--tRNA ligase (425 aa).

232–234 (TSE) provides a ligand contact to L-serine. Residues 263–265 (RRE) and Val279 each bind ATP. Glu286 contacts L-serine. 350–353 (EVVS) contacts ATP. Thr387 lines the L-serine pocket.

This sequence belongs to the class-II aminoacyl-tRNA synthetase family. Type-1 seryl-tRNA synthetase subfamily. Homodimer. The tRNA molecule binds across the dimer.

The protein resides in the cytoplasm. It catalyses the reaction tRNA(Ser) + L-serine + ATP = L-seryl-tRNA(Ser) + AMP + diphosphate + H(+). The enzyme catalyses tRNA(Sec) + L-serine + ATP = L-seryl-tRNA(Sec) + AMP + diphosphate + H(+). It participates in aminoacyl-tRNA biosynthesis; selenocysteinyl-tRNA(Sec) biosynthesis; L-seryl-tRNA(Sec) from L-serine and tRNA(Sec): step 1/1. In terms of biological role, catalyzes the attachment of serine to tRNA(Ser). Is also able to aminoacylate tRNA(Sec) with serine, to form the misacylated tRNA L-seryl-tRNA(Sec), which will be further converted into selenocysteinyl-tRNA(Sec). The polypeptide is Serine--tRNA ligase (Methanospirillum hungatei JF-1 (strain ATCC 27890 / DSM 864 / NBRC 100397 / JF-1)).